Consider the following 192-residue polypeptide: Large ribosomal subunit protein uL5 (192 aa).

The protein belongs to the universal ribosomal protein uL5 family. Part of the 50S ribosomal subunit; contacts the 5S rRNA and probably tRNA. Forms a bridge to the 30S subunit in the 70S ribosome.

This is one of the proteins that bind and probably mediate the attachment of the 5S RNA into the large ribosomal subunit, where it forms part of the central protuberance. In the 70S ribosome it contacts protein S13 of the 30S subunit (bridge B1b), connecting the 2 subunits; this bridge is implicated in subunit movement. May contact the P site tRNA; the 5S rRNA and some of its associated proteins might help stabilize positioning of ribosome-bound tRNAs. The protein is Large ribosomal subunit protein uL5 of Aeropyrum pernix (strain ATCC 700893 / DSM 11879 / JCM 9820 / NBRC 100138 / K1).